Reading from the N-terminus, the 171-residue chain is Crossover junction endodeoxyribonuclease RuvC (171 aa).

Active-site residues include aspartate 12, glutamate 72, and aspartate 144. Positions 12, 72, and 144 each coordinate Mg(2+).

This sequence belongs to the RuvC family. In terms of assembly, homodimer which binds Holliday junction (HJ) DNA. The HJ becomes 2-fold symmetrical on binding to RuvC with unstacked arms; it has a different conformation from HJ DNA in complex with RuvA. In the full resolvosome a probable DNA-RuvA(4)-RuvB(12)-RuvC(2) complex forms which resolves the HJ. Requires Mg(2+) as cofactor.

It is found in the cytoplasm. It carries out the reaction Endonucleolytic cleavage at a junction such as a reciprocal single-stranded crossover between two homologous DNA duplexes (Holliday junction).. Functionally, the RuvA-RuvB-RuvC complex processes Holliday junction (HJ) DNA during genetic recombination and DNA repair. Endonuclease that resolves HJ intermediates. Cleaves cruciform DNA by making single-stranded nicks across the HJ at symmetrical positions within the homologous arms, yielding a 5'-phosphate and a 3'-hydroxyl group; requires a central core of homology in the junction. The consensus cleavage sequence is 5'-(A/T)TT(C/G)-3'. Cleavage occurs on the 3'-side of the TT dinucleotide at the point of strand exchange. HJ branch migration catalyzed by RuvA-RuvB allows RuvC to scan DNA until it finds its consensus sequence, where it cleaves and resolves the cruciform DNA. The protein is Crossover junction endodeoxyribonuclease RuvC of Afipia carboxidovorans (strain ATCC 49405 / DSM 1227 / KCTC 32145 / OM5) (Oligotropha carboxidovorans).